The primary structure comprises 242 residues: Protein Thf1 (242 aa).

Positions 178 to 209 (SSDKLQKDLDLYRSNLDKMQQLLTVIEDTLEA) form a coiled coil. The segment at 212 to 242 (KKRASQKLEKKPEVVEEKEHKENEEQQQSSN) is disordered. Positions 217 to 235 (QKLEKKPEVVEEKEHKENE) are enriched in basic and acidic residues.

Belongs to the THF1 family.

Its function is as follows. May be involved in photosynthetic membrane biogenesis. This chain is Protein Thf1, found in Crocosphaera subtropica (strain ATCC 51142 / BH68) (Cyanothece sp. (strain ATCC 51142)).